A 532-amino-acid chain; its full sequence is Beta-hexosaminidase subunit A1 (532 aa).

The first 18 residues, 1 to 18 (MIKKIILFFAVLIAIVIG), serve as a signal peptide directing secretion. 2 N-linked (GlcNAc...) asparagine glycosylation sites follow: N72 and N79. The Proton donor role is filled by E308. N-linked (GlcNAc...) asparagine glycans are attached at residues N350 and N427.

It belongs to the glycosyl hydrolase 20 family. In terms of assembly, dimer. In terms of processing, the N-terminus is blocked. N-glycosylated.

It is found in the lysosome. It catalyses the reaction Hydrolysis of terminal non-reducing N-acetyl-D-hexosamine residues in N-acetyl-beta-D-hexosaminides.. Responsible for the degradation of GM2 gangliosides, and a variety of other molecules containing terminal N-acetyl hexosamines. This enzyme plays a role during the slug stage of development in the maintenance of pseudoplasmodia of normal size. The protein is Beta-hexosaminidase subunit A1 (hexa1) of Dictyostelium discoideum (Social amoeba).